The sequence spans 555 residues: Dimethylaniline monooxygenase [N-oxide-forming] 4 (555 aa).

FAD-binding positions include 9 to 13 (GAGVS), E32, and 40 to 41 (LW). Residues 60 to 61 (TN) and 195 to 198 (SGGD) each bind NADP(+). The chain crosses the membrane as a helical span at residues 515 to 532 (YLKVWGAPLLLASVLLIC).

The protein belongs to the FMO family. Requires FAD as cofactor. Kidney and liver.

The protein resides in the microsome membrane. Its subcellular location is the endoplasmic reticulum membrane. The catalysed reaction is N,N-dimethylaniline + NADPH + O2 + H(+) = N,N-dimethylaniline N-oxide + NADP(+) + H2O. This protein is involved in the oxidative metabolism of a variety of xenobiotics such as drugs and pesticides. The polypeptide is Dimethylaniline monooxygenase [N-oxide-forming] 4 (FMO4) (Oryctolagus cuniculus (Rabbit)).